The chain runs to 122 residues: Acidic phospholipase A2 A' (122 aa).

7 disulfides stabilise this stretch: Cys26/Cys115, Cys28/Cys44, Cys43/Cys95, Cys49/Cys122, Cys50/Cys88, Cys57/Cys81, and Cys75/Cys86. Ca(2+) is bound by residues Tyr27, Gly29, and Gly31. His47 is an active-site residue. Asp48 is a Ca(2+) binding site. Asp89 is a catalytic residue.

It belongs to the phospholipase A2 family. Group II subfamily. D49 sub-subfamily. Requires Ca(2+) as cofactor. In terms of tissue distribution, expressed by the venom gland.

The protein resides in the secreted. The enzyme catalyses a 1,2-diacyl-sn-glycero-3-phosphocholine + H2O = a 1-acyl-sn-glycero-3-phosphocholine + a fatty acid + H(+). Its function is as follows. PLA2 catalyzes the calcium-dependent hydrolysis of the 2-acyl groups in 3-sn-phosphoglycerides. The chain is Acidic phospholipase A2 A' from Gloydius halys (Chinese water mocassin).